The sequence spans 186 residues: Threonylcarbamoyl-AMP synthase (186 aa).

Residues 1 to 186 form the YrdC-like domain; the sequence is MADTWEAAHS…LNNQVFRDDA (186 aa).

The protein belongs to the SUA5 family. TsaC subfamily.

Its subcellular location is the cytoplasm. It carries out the reaction L-threonine + hydrogencarbonate + ATP = L-threonylcarbamoyladenylate + diphosphate + H2O. Functionally, required for the formation of a threonylcarbamoyl group on adenosine at position 37 (t(6)A37) in tRNAs that read codons beginning with adenine. Catalyzes the conversion of L-threonine, HCO(3)(-)/CO(2) and ATP to give threonylcarbamoyl-AMP (TC-AMP) as the acyladenylate intermediate, with the release of diphosphate. The protein is Threonylcarbamoyl-AMP synthase of Idiomarina loihiensis (strain ATCC BAA-735 / DSM 15497 / L2-TR).